A 368-amino-acid polypeptide reads, in one-letter code: MASLSGSWRDAYKGMSSDNIKGLVLALSSSLFIGASFIVKKKGLKRAGASGLRAGSGGYSYLLEPLWWVGMITMIVGEIANFAAYAFAPAILVTPLGALSIIISAALAHVILHEKLHTFGLLGCVLCVVGSITIVLHAPQEQEIDSVLQVWNLATEPAFLLYAAAVVGAAIILIVQFVPQYGQSHVMVYIGVCSLVGSLSVMSVKALGIALKLTFSGMNQLIYPQTWVFTLIVLTCVITQMNYLNKALDTFNTAVVSPIYYVMFTSLTILASVIMFKDWDRQDGTQIVTELCGFVTILSGTFLLHKTKDMVDGSSSLGNLALRLPKQLEDSNGFEQEGIPLTLRRHECTKSPRPMRQFILPQDGPEAV.

Over M1 to D18 the chain is Extracellular. The chain crosses the membrane as a helical span at residues N19–V39. The Cytoplasmic portion of the chain corresponds to K40–L66. The helical transmembrane segment at W67–F87 threads the bilayer. The Extracellular segment spans residues A88–A90. A helical membrane pass occupies residues I91–I111. Residues L112–K115 lie on the Cytoplasmic side of the membrane. A helical membrane pass occupies residues L116 to L136. Residues H137–P157 lie on the Extracellular side of the membrane. The helical transmembrane segment at A158–V178 threads the bilayer. Over P179–Y189 the chain is Cytoplasmic. A helical transmembrane segment spans residues I190–A210. The Extracellular segment spans residues L211 to Q220. A helical transmembrane segment spans residues L221 to M241. The Cytoplasmic portion of the chain corresponds to N242 to V255. Residues V256–F276 form a helical membrane-spanning segment. The Extracellular portion of the chain corresponds to K277–D283. The helical transmembrane segment at G284 to L304 threads the bilayer. The Cytoplasmic portion of the chain corresponds to H305–V368.

The protein belongs to the NIPA (TC 2.A.7) family. In terms of assembly, homodimer.

The protein resides in the cell membrane. It is found in the early endosome. Its function is as follows. Acts as a Mg(2+) transporter. Can also transport other divalent cations such as Fe(2+), Sr(2+), Ba(2+), Mn(2+) and Co(2+) but to a much less extent than Mg(2+). This chain is Probable magnesium transporter NIPA3, found in Arabidopsis thaliana (Mouse-ear cress).